The following is an 881-amino-acid chain: Probable alpha/beta-glucosidase agdC (881 aa).

An N-terminal signal peptide occupies residues 1-14 (MLRSLLLLAPLVGA). N-linked (GlcNAc...) asparagine glycosylation is found at Asn-171, Asn-293, and Asn-373. Residue Asp-422 is the Nucleophile of the active site. Residue Glu-425 is part of the active site. The segment at 440 to 485 (YSRDNDLPPAAPPVRPSNPRPLPGFPGDFQPSSSSKRSTKGSKVGL) is disordered. Over residues 448–463 (PAAPPVRPSNPRPLPG) the composition is skewed to pro residues. A glycan (N-linked (GlcNAc...) asparagine) is linked at Asn-506. Residue Asp-571 is the Proton donor of the active site. N-linked (GlcNAc...) asparagine glycosylation is found at Asn-572, Asn-608, and Asn-742.

Belongs to the glycosyl hydrolase 31 family.

The protein resides in the secreted. The catalysed reaction is Hydrolysis of terminal, non-reducing (1-&gt;4)-linked alpha-D-glucose residues with release of alpha-D-glucose.. The enzyme catalyses Hydrolysis of terminal, non-reducing beta-D-glucosyl residues with release of beta-D-glucose.. Its function is as follows. Glucosidase involved in the degradation of cellulosic biomass. Has both alpha- and beta-glucosidase activity. This Neosartorya fischeri (strain ATCC 1020 / DSM 3700 / CBS 544.65 / FGSC A1164 / JCM 1740 / NRRL 181 / WB 181) (Aspergillus fischerianus) protein is Probable alpha/beta-glucosidase agdC (agdC).